The sequence spans 351 residues: Ferredoxin--NADP reductase (351 aa).

Residues threonine 14, aspartate 33, glutamine 41, tyrosine 46, alanine 86, phenylalanine 121, aspartate 287, and threonine 328 each contribute to the FAD site.

The protein belongs to the ferredoxin--NADP reductase type 2 family. As to quaternary structure, homodimer. FAD serves as cofactor.

It carries out the reaction 2 reduced [2Fe-2S]-[ferredoxin] + NADP(+) + H(+) = 2 oxidized [2Fe-2S]-[ferredoxin] + NADPH. The polypeptide is Ferredoxin--NADP reductase (Flavobacterium psychrophilum (strain ATCC 49511 / DSM 21280 / CIP 103535 / JIP02/86)).